Reading from the N-terminus, the 131-residue chain is Small ribosomal subunit protein uS9 (131 aa).

It belongs to the universal ribosomal protein uS9 family.

This chain is Small ribosomal subunit protein uS9, found in Actinobacillus succinogenes (strain ATCC 55618 / DSM 22257 / CCUG 43843 / 130Z).